Reading from the N-terminus, the 238-residue chain is Ribonuclease 3 (238 aa).

One can recognise an RNase III domain in the interval 4–130 (IQTLFQTLNI…LFGAIYLDLG (127 aa)). E45 lines the Mg(2+) pocket. D49 is an active-site residue. Mg(2+) contacts are provided by D116 and E119. Residue E119 is part of the active site. A DRBM domain is found at 154–222 (DFKTQLQEIV…AQQALSKVAK (69 aa)). Positions 215–238 (QALSKVAKPKDLLNNKGGKEKELQ) are disordered. Residues 222 to 238 (KPKDLLNNKGGKEKELQ) show a composition bias toward basic and acidic residues.

Belongs to the ribonuclease III family. Homodimer. Requires Mg(2+) as cofactor.

It is found in the cytoplasm. It catalyses the reaction Endonucleolytic cleavage to 5'-phosphomonoester.. Functionally, digests double-stranded RNA. Involved in the processing of primary rRNA transcript to yield the immediate precursors to the large and small rRNAs (23S and 16S). Processes some mRNAs, and tRNAs when they are encoded in the rRNA operon. Processes pre-crRNA and tracrRNA of type II CRISPR loci if present in the organism. The polypeptide is Ribonuclease 3 (Onion yellows phytoplasma (strain OY-M)).